Consider the following 704-residue polypeptide: Neutral ceramidase (704 aa).

The first 23 residues, Met1–Ala23, serve as a signal peptide directing secretion. Asn230 is a glycosylation site (N-linked (GlcNAc...) asparagine). The active-site Nucleophile is Ser276. 3 N-linked (GlcNAc...) asparagine glycosylation sites follow: Asn362, Asn550, and Asn598.

This sequence belongs to the neutral ceramidase family. Post-translationally, N-glycosylated. In terms of tissue distribution, widely expressed in different tissues but enriched in neurons at all stages of development.

The protein resides in the secreted. The catalysed reaction is an N-acylsphing-4-enine + H2O = sphing-4-enine + a fatty acid. Functionally, hydrolyzes the sphingolipid ceramide into sphingosine and free fatty acid at an optimal pH of 6.5-7.5. Acts as a key regulator of sphingolipid signaling metabolites by generating sphingosine at the cell surface. Regulates synaptic vesicle exocytosis and trafficking by controlling presynaptic terminal sphingolipid composition. The polypeptide is Neutral ceramidase (CDase) (Drosophila melanogaster (Fruit fly)).